The primary structure comprises 151 residues: SsrA-binding protein (151 aa).

It belongs to the SmpB family.

It is found in the cytoplasm. Functionally, required for rescue of stalled ribosomes mediated by trans-translation. Binds to transfer-messenger RNA (tmRNA), required for stable association of tmRNA with ribosomes. tmRNA and SmpB together mimic tRNA shape, replacing the anticodon stem-loop with SmpB. tmRNA is encoded by the ssrA gene; the 2 termini fold to resemble tRNA(Ala) and it encodes a 'tag peptide', a short internal open reading frame. During trans-translation Ala-aminoacylated tmRNA acts like a tRNA, entering the A-site of stalled ribosomes, displacing the stalled mRNA. The ribosome then switches to translate the ORF on the tmRNA; the nascent peptide is terminated with the 'tag peptide' encoded by the tmRNA and targeted for degradation. The ribosome is freed to recommence translation, which seems to be the essential function of trans-translation. The polypeptide is SsrA-binding protein (Geotalea uraniireducens (strain Rf4) (Geobacter uraniireducens)).